The primary structure comprises 623 residues: Scarecrow-like protein 22 (623 aa).

Disordered regions lie at residues 62 to 90 (RSPS…AAAA) and 179 to 203 (PNPG…QPGS). Over residues 63 to 80 (SPSPFVSSSTTTLSSSHG) the composition is skewed to low complexity. In terms of domain architecture, GRAS spans 235 to 622 (NDQDQSAVII…KELVTVSAWK (388 aa)). The leucine repeat I (LRI) stretch occupies residues 242–311 (VIIDQLFSAA…ALHSLLQDSS (70 aa)). The VHIID stretch occupies residues 330–398 (YRAFSETSPF…SSAPSLKITA (69 aa)). Residues 361–365 (IHIVD) carry the VHIID motif. Residues 413–448 (FTEENLRSFAGETGVSFEIELLNMEILLNPTYWPLS) form a leucine repeat II (LRII) region. Positions 458 to 545 (IAVNLPISSM…RFCVQPSIQK (88 aa)) are PFYRE. Residues 548 to 622 (TNRYRWMERS…KELVTVSAWK (75 aa)) form an SAW region.

This sequence belongs to the GRAS family. In terms of tissue distribution, expressed in seedlings, roots, leaves and flowers.

It is found in the nucleus. Its function is as follows. Probable transcription factor involved in plant development. This chain is Scarecrow-like protein 22 (SCL22), found in Arabidopsis thaliana (Mouse-ear cress).